A 224-amino-acid polypeptide reads, in one-letter code: Large ribosomal subunit protein uL11c (224 aa).

Residues 1 to 66 constitute a chloroplast transit peptide; it reads MAQPLVAAPS…SHRRLSIVAM (66 aa). An N6,N6,N6-trimethyllysine mark is found at Lys-75 and Lys-111.

Component of the chloroplast large ribosomal subunit (LSU). Mature 70S chloroplast ribosomes of higher plants consist of a small (30S) and a large (50S) subunit. The 30S small subunit contains 1 molecule of ribosomal RNA (16S rRNA) and 24 different proteins. The 50S large subunit contains 3 rRNA molecules (23S, 5S and 4.5S rRNA) and 33 different proteins.

The protein resides in the plastid. Its subcellular location is the chloroplast. Component of the chloroplast ribosome (chloro-ribosome), a dedicated translation machinery responsible for the synthesis of chloroplast genome-encoded proteins, including proteins of the transcription and translation machinery and components of the photosynthetic apparatus. In Spinacia oleracea (Spinach), this protein is Large ribosomal subunit protein uL11c (rpl11).